We begin with the raw amino-acid sequence, 289 residues long: Nucleotide-binding protein LAF_0356 (289 aa).

12 to 19 (GMSGAGKT) contributes to the ATP binding site. 62 to 65 (DSRS) is a GTP binding site.

This sequence belongs to the RapZ-like family.

In terms of biological role, displays ATPase and GTPase activities. The protein is Nucleotide-binding protein LAF_0356 of Limosilactobacillus fermentum (strain NBRC 3956 / LMG 18251) (Lactobacillus fermentum).